The following is a 156-amino-acid chain: RNA polymerase sigma factor SigS (156 aa).

The Polymerase core binding motif lies at 29–44 (EYYQLLLIKMWQLSQI). Residues 126–145 (QYEIADIMSLSTSTIKLIKA) constitute a DNA-binding region (H-T-H motif).

This sequence belongs to the sigma-70 factor family.

Sigma factors are initiation factors that promote the attachment of RNA polymerase to specific initiation sites and are then released. Sigma-S contributes to the protection against external stress, thus playing a role in cellular fitness and survival. In Staphylococcus aureus (strain MRSA252), this protein is RNA polymerase sigma factor SigS (sigS).